Reading from the N-terminus, the 413-residue chain is Tryptophan synthase beta chain (413 aa).

Lysine 106 carries the N6-(pyridoxal phosphate)lysine modification.

It belongs to the TrpB family. As to quaternary structure, tetramer of two alpha and two beta chains. Pyridoxal 5'-phosphate serves as cofactor.

The catalysed reaction is (1S,2R)-1-C-(indol-3-yl)glycerol 3-phosphate + L-serine = D-glyceraldehyde 3-phosphate + L-tryptophan + H2O. Its pathway is amino-acid biosynthesis; L-tryptophan biosynthesis; L-tryptophan from chorismate: step 5/5. Functionally, the beta subunit is responsible for the synthesis of L-tryptophan from indole and L-serine. The protein is Tryptophan synthase beta chain of Methylorubrum populi (strain ATCC BAA-705 / NCIMB 13946 / BJ001) (Methylobacterium populi).